The following is a 453-amino-acid chain: Ribosomal protein uS12 methylthiotransferase RimO (453 aa).

The region spanning 4 to 120 (TSVHIVSLGC…IADHLRVLME (117 aa)) is the MTTase N-terminal domain. [4Fe-4S] cluster is bound by residues Cys-13, Cys-49, Cys-83, Cys-161, Cys-165, and Cys-168. The 231-residue stretch at 147-377 (STPPYSAYLK…MEEQAVISHE (231 aa)) folds into the Radical SAM core domain. Positions 380-450 (QTLVGSLQEV…DYDLFAEVIS (71 aa)) constitute a TRAM domain.

The protein belongs to the methylthiotransferase family. RimO subfamily. [4Fe-4S] cluster serves as cofactor.

Its subcellular location is the cytoplasm. The catalysed reaction is L-aspartate(89)-[ribosomal protein uS12]-hydrogen + (sulfur carrier)-SH + AH2 + 2 S-adenosyl-L-methionine = 3-methylsulfanyl-L-aspartate(89)-[ribosomal protein uS12]-hydrogen + (sulfur carrier)-H + 5'-deoxyadenosine + L-methionine + A + S-adenosyl-L-homocysteine + 2 H(+). Its function is as follows. Catalyzes the methylthiolation of an aspartic acid residue of ribosomal protein uS12. The protein is Ribosomal protein uS12 methylthiotransferase RimO of Syntrophus aciditrophicus (strain SB).